We begin with the raw amino-acid sequence, 453 residues long: 3-phosphoshikimate 1-carboxyvinyltransferase (453 aa).

Residues 1 to 12 are compositionally biased toward polar residues; that stretch reads MDVNVTSSTVRG. Residues 1-21 are disordered; that stretch reads MDVNVTSSTVRGTTRAPPSKS. 3-phosphoshikimate-binding residues include K20, S21, and R25. K20 serves as a coordination point for phosphoenolpyruvate. Phosphoenolpyruvate-binding residues include G97 and R125. 3-phosphoshikimate contacts are provided by S170, S171, Q172, S198, D330, and K357. Q172 provides a ligand contact to phosphoenolpyruvate. The Proton acceptor role is filled by D330. Positions 361 and 404 each coordinate phosphoenolpyruvate.

The protein belongs to the EPSP synthase family. As to quaternary structure, monomer.

The protein localises to the cytoplasm. It catalyses the reaction 3-phosphoshikimate + phosphoenolpyruvate = 5-O-(1-carboxyvinyl)-3-phosphoshikimate + phosphate. Its pathway is metabolic intermediate biosynthesis; chorismate biosynthesis. Catalyzes the transfer of the enolpyruvyl moiety of phosphoenolpyruvate (PEP) to the 5-hydroxyl of shikimate-3-phosphate (S3P) to produce enolpyruvyl shikimate-3-phosphate and inorganic phosphate. The polypeptide is 3-phosphoshikimate 1-carboxyvinyltransferase (Halorubrum lacusprofundi (strain ATCC 49239 / DSM 5036 / JCM 8891 / ACAM 34)).